The chain runs to 386 residues: Indole-3-acetate O-methyltransferase 1 (386 aa).

Tyr30 is a binding site for S-adenosyl-L-methionine. Substrate contacts are provided by residues Tyr30 and 33 to 37 (NSQAQ). Residues Gly72, 72–73 (GC), Asn78, 108–111 (FSDL), Asp110, 152–154 (SFY), and 169–171 (AFS) contribute to the S-adenosyl-L-methionine site. 170–174 (FSLHW) is a binding site for substrate. Mg(2+) contacts are provided by Asn191, Val195, Arg277, Asp278, Phe280, and Asn281. Ser334 provides a ligand contact to substrate.

The protein belongs to the methyltransferase superfamily. SABATH family. As to quaternary structure, homodimer. Mg(2+) serves as cofactor. Expressed in seedling roots and leaves. Expressed in the stigma, funiculus, and vascular bundles in sepals, petals and stamens.

The enzyme catalyses (indol-3-yl)acetate + S-adenosyl-L-methionine = methyl (indol-3-yl)acetate + S-adenosyl-L-homocysteine. In terms of biological role, catalyzes the methylation of the free carboxyl end of the plant hormone indole-3-acetic acid (IAA). Converts IAA to IAA methyl ester (MeIAA). Regulates IAA activities by IAA methylation. Methylation of IAA plays an important role in regulating plant development and auxin homeostasis. Required for correct leaf pattern formation. MeIAA seems to be an inactive form of IAA. The chain is Indole-3-acetate O-methyltransferase 1 (IAMT1) from Arabidopsis thaliana (Mouse-ear cress).